We begin with the raw amino-acid sequence, 496 residues long: Glycylpeptide N-tetradecanoyltransferase 1 (496 aa).

A disordered region spans residues 1–82; it reads MADESETAVK…SAQDQPVKMN (82 aa). Residues Ser31 and Ser47 each carry the phosphoserine modification. Positions 55–66 are enriched in basic residues; sequence KKKKKKQKKKKE. Ser83 bears the Phosphoserine mark. Positions 118, 119, 120, 247, 248, 249, 250, 256, 258, 259, and 260 each coordinate tetradecanoyl-CoA.

This sequence belongs to the NMT family. As to expression, heart, gut, kidney, liver and placenta.

Its subcellular location is the cytoplasm. The protein localises to the cytosol. It is found in the membrane. It catalyses the reaction N-terminal glycyl-[protein] + tetradecanoyl-CoA = N-tetradecanoylglycyl-[protein] + CoA + H(+). It carries out the reaction N-terminal glycyl-L-lysyl-[protein] + tetradecanoyl-CoA = N-terminal glycyl-(N(6)-tetradecanoyl)-L-lysyl-[protein] + CoA + H(+). In terms of biological role, adds a myristoyl group to the N-terminal glycine residue of certain cellular and viral proteins. Also able to mediate N-terminal lysine myristoylation of proteins: catalyzes myristoylation of ARF6 on both 'Gly-2' and 'Lys-3'. Lysine myristoylation is required to maintain ARF6 on membranes during the GTPase cycle. The chain is Glycylpeptide N-tetradecanoyltransferase 1 from Homo sapiens (Human).